The following is a 338-amino-acid chain: tRNA-specific 2-thiouridylase MnmA (338 aa).

ATP is bound by residues 6–13 (AMSGGVDS) and Met-32. Catalysis depends on Cys-92, which acts as the Nucleophile. Cys-92 and Cys-186 are disulfide-bonded. Gly-116 contacts ATP. An interaction with tRNA region spans residues 134 to 136 (KDQ). Catalysis depends on Cys-186, which acts as the Cysteine persulfide intermediate. Positions 288 to 289 (RY) are interaction with tRNA.

It belongs to the MnmA/TRMU family.

Its subcellular location is the cytoplasm. The enzyme catalyses S-sulfanyl-L-cysteinyl-[protein] + uridine(34) in tRNA + AH2 + ATP = 2-thiouridine(34) in tRNA + L-cysteinyl-[protein] + A + AMP + diphosphate + H(+). Functionally, catalyzes the 2-thiolation of uridine at the wobble position (U34) of tRNA, leading to the formation of s(2)U34. In Campylobacter lari (strain RM2100 / D67 / ATCC BAA-1060), this protein is tRNA-specific 2-thiouridylase MnmA.